A 799-amino-acid polypeptide reads, in one-letter code: DISARM protein DrmE (799 aa).

It is found in the cytoplasm. Its function is as follows. Component of antiviral defense system DISARM (defense island system associated with restriction-modification), composed of DrmE, DrmA, DrmB, DrmC and DrmMII. DISARM is probably a multi-gene restriction module, this subunit has an unknown function. Expression of DISARM in B.subtilis (strain BEST7003) confers resistance to phages Nf, phi29, phi105, phi3T, SPO1, SPR and SPP1. Protection is over 10(7)-fold against phi3T, 10(4)-10(5)-fold against Nf, phi29, phi105 and SPR, 100-fold against SPO1 and 10-fold against SPP1. DISARM does not interfere with phage adsorption, but instead interferes with (phi3T) DNA replication early in its cycle, preventing replication, circularization and lysogeny and probably causes phage DNA degradation (DNA is degraded in SPP1-infected cells). The sequence is that of DISARM protein DrmE from Bacillus paralicheniformis (strain ATCC 9945a / NCIMB 11709 / CD-2).